We begin with the raw amino-acid sequence, 221 residues long: MQEIPEKPLSQPAGTEIIEKYFPHLSERQREQFEQMGGLYTHWNALINVISRKDIDNLYLHHVLHSLGIARMLNFKPGTSVLDLGTGGGFPGIPLAILFPQVSFLLVDSIGKKVKVASAVAEALGLDNVRTMHCRAESIGEKFDFIVSRAVMKLSELAKICRKLIRREDQQNALPNGLICLKGGELQHEILPFRNKAMTEELWPTFEEEYFKTKKVVYLPL.

S-adenosyl-L-methionine-binding positions include G85, F90, 136 to 137 (AE), and R149.

It belongs to the methyltransferase superfamily. RNA methyltransferase RsmG family.

The protein localises to the cytoplasm. Its function is as follows. Specifically methylates the N7 position of a guanine in 16S rRNA. This Porphyromonas gingivalis (strain ATCC BAA-308 / W83) protein is Ribosomal RNA small subunit methyltransferase G.